We begin with the raw amino-acid sequence, 193 residues long: Thymidine kinase (193 aa).

Residues 9–16 (STMNAGKS) and 87–90 (DEAN) each bind ATP. Glutamate 88 (proton acceptor) is an active-site residue. The Zn(2+) site is built by cysteine 145, cysteine 147, cysteine 182, and histidine 185.

It belongs to the thymidine kinase family. As to quaternary structure, homotetramer.

The protein resides in the cytoplasm. It catalyses the reaction thymidine + ATP = dTMP + ADP + H(+). The protein is Thymidine kinase of Agrobacterium fabrum (strain C58 / ATCC 33970) (Agrobacterium tumefaciens (strain C58)).